A 227-amino-acid chain; its full sequence is MASFRIRQFQERDYKQVVDVFSRGMEEHIPTAFRHLLTLPRTLLLLAVVPLAIVLVSGSWFLAVVCIFFLFLFLWFLASKPWKNYVSKCLHTDMADITKSYLSVRGSGFWVAESGGQVVGTVAARPVKDPPLGRKQLQLFRLSVSSQHRGQGIAKALTRTVLQFARDQGYSDVVLVTGLLQQGAVTLYYSMGFQKTGESFVDILTWLVDVSLIHFIYPLPSAQKYEL.

The Cytoplasmic portion of the chain corresponds to 1-35; the sequence is MASFRIRQFQERDYKQVVDVFSRGMEEHIPTAFRH. A helical; Signal-anchor for type II membrane protein transmembrane segment spans residues 36–56; that stretch reads LLTLPRTLLLLAVVPLAIVLV. At 57–227 the chain is on the lumenal side; the sequence is SGSWFLAVVC…PLPSAQKYEL (171 aa). The N-acetyltransferase domain occupies 69 to 217; that stretch reads FLFLFLWFLA…VDVSLIHFIY (149 aa).

Belongs to the NAT8 family. As to expression, expressed in brain (at protein level).

Its subcellular location is the endoplasmic reticulum-Golgi intermediate compartment membrane. It is found in the endoplasmic reticulum membrane. It catalyses the reaction L-lysyl-[protein] + acetyl-CoA = N(6)-acetyl-L-lysyl-[protein] + CoA + H(+). The enzyme catalyses an S-substituted L-cysteine + acetyl-CoA = an N-acetyl-L-cysteine-S-conjugate + CoA + H(+). It functions in the pathway sulfur metabolism; glutathione metabolism. Endoplasmic reticulum (ER)-membrane-bound lysine N-acetyltransferase catalyzing the N6-acetylation of lysine residues in the lumen of the ER in various proteins, including PROM1 and BACE1, using acetyl-CoA as acetyl donor. Thereby, may regulate apoptosis through the acetylation and the regulation of the expression of PROM1. May also regulate amyloid beta-peptide secretion through acetylation of BACE1 and the regulation of its expression in neurons. N(6)-lysine acetylation in the ER maintains protein homeostasis and regulates reticulophagy. Alternatively, acetylates the free alpha-amino group of cysteine S-conjugates to form mercapturic acids. This is the final step in a major route for detoxification of a wide variety of reactive electrophiles which starts with their incorporation into glutathione S-conjugates. The glutathione S-conjugates are then further processed into cysteine S-conjugates and finally mercapturic acids which are water soluble and can be readily excreted in urine or bile. The sequence is that of N-acetyltransferase 8 (Nat8) from Mus musculus (Mouse).